A 338-amino-acid chain; its full sequence is N-acetyl-gamma-glutamyl-phosphate reductase (338 aa).

Residue C148 is part of the active site.

This sequence belongs to the NAGSA dehydrogenase family. Type 1 subfamily.

Its subcellular location is the cytoplasm. The catalysed reaction is N-acetyl-L-glutamate 5-semialdehyde + phosphate + NADP(+) = N-acetyl-L-glutamyl 5-phosphate + NADPH + H(+). The protein operates within amino-acid biosynthesis; L-arginine biosynthesis; N(2)-acetyl-L-ornithine from L-glutamate: step 3/4. Its function is as follows. Catalyzes the NADPH-dependent reduction of N-acetyl-5-glutamyl phosphate to yield N-acetyl-L-glutamate 5-semialdehyde. This is N-acetyl-gamma-glutamyl-phosphate reductase from Leptospira interrogans serogroup Icterohaemorrhagiae serovar copenhageni (strain Fiocruz L1-130).